The chain runs to 321 residues: uncharacterized protein (321 aa).

Residues 1–5 (MKQQA) are Cytoplasmic-facing. The chain crosses the membrane as a helical span at residues 6 to 26 (GIGILLALTTAICWGALPIAM). An EamA 1 domain is found at 17–144 (ICWGALPIAM…LLSGLVMFFN (128 aa)). Residues 27–35 (KQVLEVMEP) are Periplasmic-facing. A helical transmembrane segment spans residues 36–56 (PTIVFYRFLMASIGLGAILAV). Over 57-70 (KKRLPPLRVFRKPR) the chain is Cytoplasmic. Residues 71-91 (WLILLAVATAGLFGNFILFSS) traverse the membrane as a helical segment. The Periplasmic portion of the chain corresponds to 92 to 99 (SLQYLSPT). Residues 100–120 (ASQVIGQLSPVGMMVASVFIL) form a helical membrane-spanning segment. Residues 121 to 130 (KEKMRSTQVV) lie on the Cytoplasmic side of the membrane. Residues 131 to 151 (GALMLLSGLVMFFNTSLVEIF) traverse the membrane as a helical segment. Residues 152-156 (TKLTD) lie on the Periplasmic side of the membrane. Residues 157–177 (YTWGVIFGVGAATVWVSYGVA) form a helical membrane-spanning segment. The EamA 2 domain maps to 169–292 (TVWVSYGVAQ…GYLGAFVVVA (124 aa)). Topologically, residues 178–190 (QKVLLRRLASPQI) are cytoplasmic. Residues 191-211 (LFLLYTLCTIALFPLAKPGVI) traverse the membrane as a helical segment. Over 212 to 216 (AQLSH) the chain is Periplasmic. A helical transmembrane segment spans residues 217-237 (WQLACLIFCGLNTLVGYGALA). The Cytoplasmic portion of the chain corresponds to 238–249 (EAMARWQAAQVS). A helical transmembrane segment spans residues 250–270 (AIITLTPLFTLFFSDLLSLAW). The Periplasmic segment spans residues 271–278 (PDFFARPM). The chain crosses the membrane as a helical span at residues 279–299 (LNLLGYLGAFVVVAGAMYSAI). The Cytoplasmic portion of the chain corresponds to 300–321 (GHRIWGGLRKHTTVVSQPRAGE).

Belongs to the EamA transporter family.

Its subcellular location is the cell inner membrane. This is an uncharacterized protein from Escherichia coli O157:H7.